We begin with the raw amino-acid sequence, 835 residues long: Protein VP3 (835 aa).

Positions 171-245 are N7-methyltransferase activity; it reads KKIKERMTTS…KDTIKLKQER (75 aa). The 2'-O-methyltransferase activity stretch occupies residues 246 to 428; it reads WLGKRLSQFD…KNTKRFIPKG (183 aa). The tract at residues 429-555 is N7-methyltransferase activity; it reads VLYSYINNTI…NHLFILSGTN (127 aa). The tract at residues 556 to 692 is GTase/RTPase activity; that stretch reads KYFKLDQFAN…NYINKVYSIT (137 aa). The segment at 693–835 is 2'-5'-phosphodiesterase activity; the sequence is YADDPNYFIG…KGDTVFDMTE (143 aa). Residues histidine 718, threonine 720, histidine 797, and threonine 799 each act as for 2'-5'-phosphodiesterase activity in the active site.

Belongs to the rotavirus VP3 family. As to quaternary structure, interacts with VP1. Interacts with VP2.

The protein resides in the virion. It catalyses the reaction a 5'-end diphospho-ribonucleoside in mRNA + GTP + H(+) = a 5'-end (5'-triphosphoguanosine)-ribonucleoside in mRNA + diphosphate. The catalysed reaction is a 5'-end (5'-triphosphoguanosine)-ribonucleoside in mRNA + S-adenosyl-L-methionine = a 5'-end (N(7)-methyl 5'-triphosphoguanosine)-ribonucleoside in mRNA + S-adenosyl-L-homocysteine. It carries out the reaction 5'-triphosphoadenylyl-(2'-&gt;5')-adenylyl-(2'-&gt;5')-adenosine + 2 H2O = 2 AMP + ATP + 2 H(+). Multifunctional enzyme involved in mRNA capping. Catalyzes the formation of the 5' cap structure on the viral plus-strand transcripts. Specifically binds to GTP and displays guanylyltransferase and methyltransferase activities. Has affinity for ssRNA but not for dsRNA. Capping activity is non-specific and caps RNAs that initiate with either a G or an A residue. Together with VP1 polymerase, forms a VP1-VP3 complex positioned near the channels situated at each of the five-fold vertices of the core. Following infection, the outermost layer of the virus is lost, leaving a double-layered particle (DLP) made up of the core and VP6 shell. VP1 then catalyzes the transcription of fully conservative plus-strand genomic RNAs that are capped by VP3 and extruded through the DLP's channels into the cytoplasm where they function as mRNAs for translation of viral proteins. DLPs probably have an RNA triphosphatase activity as well, whereas open cores do not. In terms of biological role, counteracts the host innate immune response thanks to its phosphodiesterase that degrades the 5'-triphosphorylated, 2'-5' linked adenylate oligomers produced by the host cell IFN-inducible 2',5'-oligoadenylate synthetase (OAS). The host RNaseL is therefore not activated. This chain is Protein VP3, found in Bos taurus (Bovine).